The chain runs to 1058 residues: MIKEITAKYNAEQIEKKITQLWKDSDAYRKTREHRKTGKRLFFVDGPPYTTGHIHLGTAWNKIIKDSILRYYSMNNRNILERPGWDMHGLPIEVKVEGVLGFKSKKDIESFGVENFIEKCKEFAINQKQEMTEQFQRLGVWMQWEAPYMTLKDDYIEAAWWTLKQASEKNLLDVGKRSVNWCPRCETAIADSEVEYAERTDPSIYVKFKIKGEENTFIVIWTTTPWTIPANVAVAVHPGFEYSKFRAIRQDGSDEILIAATDLIENVLRQGRYVDYEVLETMLGEDLTKLEYESPVGDLVPVQNEIKHGIYLADYVTAENTGCVHIAPGHGMDDFNVGVKYNLPILCPVGPNGAYTEEAGEYAGKNVREANPIVIEDLRKRNRLLAEGTVTHRYGHCWRCKTPIIYLATEQWFLKVTDIKDKMLEAIDAVDWYPEWAGSARFRTWVEGARDWCISRQRYWGMPIPVWKCKKCGKLEVIGTKAELLEKSGAGSDVELHRPYVDKLTIPCECGGEKKRVEDVFDVWFDSAVASWATLKFPQTREQFDEWWPADFITEGHDQTRGWFYSQLGASMVGFGRAPYKSVLMHGFTLDAGGKKMSKSLGNVVSPIDVIDKYGADTLRAYVLSSSAPWDDLKFNQEEVENVHRSINILWNVFRFPLPYMALDNFDPLKVSLDSVKDALREEDRWILSRIQSVVKAVDEAMSGYFLHKAVREILEFTLEDLSRWYIQLIRPRTWTEADDPDKLAAYRVLYEVYVTLTKLISPFMPYLAEEMYQNLIRNVDPNALESVHMCDWPKVNEAYLDPELEAAMSTARSIVEAASNARQKAGRKLRWPVSRIVVSPESEDAAKAVERLRSVLMDQTNSKAIVLTPVGESWDELGLEVIPDPSKIGPVFKKDAGKVIPALQKVDGFALKKAFAEAGEFELSLADRTTVTVTPGMANFKETLPEGTASAESDAGLVYVDANLTPELEAEGYAREVIRRLQDMRKELDLVVDENIRVSVRIEDERVLRLVETLKDLIAEEVRAEILNLGSDIDVSGALVKDWDVEGIAMKMGISKK.

A 'HIGH' region motif is present at residues 48-58 (PYTTGHIHLGT). A 'KMSKS' region motif is present at residues 596–600 (KMSKS). Lys599 lines the ATP pocket.

It belongs to the class-I aminoacyl-tRNA synthetase family. IleS type 2 subfamily. As to quaternary structure, monomer. It depends on Zn(2+) as a cofactor.

Its subcellular location is the cytoplasm. It carries out the reaction tRNA(Ile) + L-isoleucine + ATP = L-isoleucyl-tRNA(Ile) + AMP + diphosphate. In terms of biological role, catalyzes the attachment of isoleucine to tRNA(Ile). As IleRS can inadvertently accommodate and process structurally similar amino acids such as valine, to avoid such errors it has two additional distinct tRNA(Ile)-dependent editing activities. One activity is designated as 'pretransfer' editing and involves the hydrolysis of activated Val-AMP. The other activity is designated 'posttransfer' editing and involves deacylation of mischarged Val-tRNA(Ile). This chain is Isoleucine--tRNA ligase, found in Methanosarcina barkeri (strain Fusaro / DSM 804).